The sequence spans 354 residues: Ornithine transcarbamylase, mitochondrial (354 aa).

A mitochondrion-targeting transit peptide spans 1–32 (MLSNLRILLNKAALRKAHTSMVRNFRYGKPVQ). Residue Lys70 is modified to N6-acetyllysine; alternate. Lys70 is subject to N6-succinyllysine; alternate. Residue Lys80 is modified to N6-succinyllysine. Lys88 is subject to N6-acetyllysine; alternate. An N6-succinyllysine; alternate modification is found at Lys88. 90–93 (STRT) provides a ligand contact to carbamoyl phosphate. Ser133 is subject to Phosphoserine. Arg141 provides a ligand contact to carbamoyl phosphate. The residue at position 144 (Lys144) is an N6-acetyllysine; alternate. Lys144 is subject to N6-succinyllysine; alternate. The carbamoyl phosphate site is built by His168 and Gln171. L-ornithine is bound at residue Asn199. N6-acetyllysine; alternate is present on residues Lys221, Lys231, and Lys238. Residues Lys221, Lys231, and Lys238 each carry the N6-succinyllysine; alternate modification. Residues Asp263, Ser267, and Met268 each coordinate L-ornithine. An N6-succinyllysine mark is found at Lys274 and Lys289. At Lys292 the chain carries N6-acetyllysine; alternate. Lys292 bears the N6-succinyllysine; alternate mark. Cys303 (proton acceptor) is an active-site residue. 303 to 304 (CL) lines the carbamoyl phosphate pocket. The residue at position 307 (Lys307) is an N6-acetyllysine; alternate. Position 307 is an N6-succinyllysine; alternate (Lys307). Arg330 contributes to the carbamoyl phosphate binding site.

Belongs to the aspartate/ornithine carbamoyltransferase superfamily. OTCase family. In terms of assembly, homotrimer. Acetylation at Lys-88 negatively regulates ornithine carbamoyltransferase activity in response to nutrient signals.

The protein resides in the mitochondrion matrix. The enzyme catalyses carbamoyl phosphate + L-ornithine = L-citrulline + phosphate + H(+). Its pathway is nitrogen metabolism; urea cycle; L-citrulline from L-ornithine and carbamoyl phosphate: step 1/1. With respect to regulation, negatively regulated by lysine acetylation. In terms of biological role, catalyzes the second step of the urea cycle, the condensation of carbamoyl phosphate with L-ornithine to form L-citrulline. The urea cycle ensures the detoxification of ammonia by converting it to urea for excretion. The chain is Ornithine transcarbamylase, mitochondrial from Rattus norvegicus (Rat).